We begin with the raw amino-acid sequence, 1064 residues long: Valine--tRNA ligase, mitochondrial (1064 aa).

Residues 1 to 26 constitute a mitochondrion transit peptide; the sequence is MPHLPLASFRPPFWGLRHSRGLPRFH. The segment at 25–65 is disordered; the sequence is FHSVSTQSEPHGSPISRRNREAKQKRLREKQATLETDIAGE. A compositionally biased stretch (basic and acidic residues) spans 42-56; the sequence is RNREAKQKRLREKQA. The 'HIGH' region motif lies at 146–156; it reads PNVTGSLHIGH. The short motif at 659 to 663 is the 'KMSKS' region element; it reads KMSKS. Lys-662 provides a ligand contact to ATP.

It belongs to the class-I aminoacyl-tRNA synthetase family.

The protein localises to the mitochondrion. The enzyme catalyses tRNA(Val) + L-valine + ATP = L-valyl-tRNA(Val) + AMP + diphosphate. Functionally, catalyzes the attachment of valine to tRNA(Val) in a two-step reaction: valine is first activated by ATP to form Val-AMP and then transferred to the acceptor end of tRNA(Val). The sequence is that of Valine--tRNA ligase, mitochondrial (VARS2) from Macaca mulatta (Rhesus macaque).